The sequence spans 190 residues: GTP cyclohydrolase 1 (190 aa).

Zn(2+) is bound by residues Cys75, His78, and Cys146.

Belongs to the GTP cyclohydrolase I family. In terms of assembly, toroid-shaped homodecamer, composed of two pentamers of five dimers.

It catalyses the reaction GTP + H2O = 7,8-dihydroneopterin 3'-triphosphate + formate + H(+). Its pathway is cofactor biosynthesis; 7,8-dihydroneopterin triphosphate biosynthesis; 7,8-dihydroneopterin triphosphate from GTP: step 1/1. The polypeptide is GTP cyclohydrolase 1 (Campylobacter jejuni subsp. doylei (strain ATCC BAA-1458 / RM4099 / 269.97)).